The sequence spans 436 residues: MFESKINPLWQSFILAVQEEVKPALGCTEPISLALAAAAAAAELDGTVERIDAWVSPNLMKNGMGVTVPGTGMVGLPIAAALGALGGDAKAGLEVLKDASAKAVADAKAMLAAGHVAVMLQEPCNDILFSRAKVYSGDSWACVTIVGDHTNIVRIETDKGVVFTQADNAQEEEKTSPLGVLSHTSLEEILAFVNAVPFDAIRFILDAARLNGALSQEGLRGSWGLHIGSTLVKQCDRGLLAKDLSTAILIRTSAASDARMGGATLPAMSNSGSGNQGITATVPVMVVAEHVGADDECLARALMLSHLSAIYIHHQLPRLSALCAATTAAMGAAAGMAWLIDGRYDTIAMAISSMIGDVSGMICDGASNSCAMKVSISASAAWKAVLMALDDTAVTGNEGIVAHNVEQSISNLCSLACRSMQQTDKQIIEIMASKAH.

This sequence belongs to the UPF0597 family.

This Salmonella paratyphi A (strain ATCC 9150 / SARB42) protein is UPF0597 protein YhaM.